Reading from the N-terminus, the 492-residue chain is MKKAILSVSNKTGIVEFAKALTQLNYELYSTGGTKRILDEANVPVRSVSDLTHFPEIMDGRVKTLHPAVHGGILADRNKPQHLNELSEQHIDLIDMVVVNLYPFQQTVANPDVTMDEAIENIDIGGPTMLRAAAKNYKHVTTIVHPADYQEVLTRLRNDSLDESYRQSLMIKVFEHTAEYDEAIVRFFKGDKETLRYGENPQQSAYFVRTSNAKHTIAGAKQLHGKQLSYNNIKDADATLALVKKFDTPAAVAVKHMNPCGVGIGDTLEQAFHHAYEADSQSIFGGIVALNRAVTPELAEQLHSIFLEVIIAPKFTDEALNILKQKKNVRLLEIDMTIDSNEEEFVSVSGGYLVQDKDNYVVPKEEMKVVTEVAPTDEQWEAMLLGWKVVPSVKSNAIILSNNKQTVGIGAGQMNRVGAAKIALERAIEINDHVALVSDGFFPMGDTVELAAQHGIKAIIQPGGSIKDQDSIDMANKHGIAMVVTGTRHFKH.

The region spanning 1–144 (MKKAILSVSN…KNYKHVTTIV (144 aa)) is the MGS-like domain.

It belongs to the PurH family.

The enzyme catalyses (6R)-10-formyltetrahydrofolate + 5-amino-1-(5-phospho-beta-D-ribosyl)imidazole-4-carboxamide = 5-formamido-1-(5-phospho-D-ribosyl)imidazole-4-carboxamide + (6S)-5,6,7,8-tetrahydrofolate. It catalyses the reaction IMP + H2O = 5-formamido-1-(5-phospho-D-ribosyl)imidazole-4-carboxamide. The protein operates within purine metabolism; IMP biosynthesis via de novo pathway; 5-formamido-1-(5-phospho-D-ribosyl)imidazole-4-carboxamide from 5-amino-1-(5-phospho-D-ribosyl)imidazole-4-carboxamide (10-formyl THF route): step 1/1. It functions in the pathway purine metabolism; IMP biosynthesis via de novo pathway; IMP from 5-formamido-1-(5-phospho-D-ribosyl)imidazole-4-carboxamide: step 1/1. This chain is Bifunctional purine biosynthesis protein PurH, found in Staphylococcus aureus (strain MRSA252).